A 292-amino-acid chain; its full sequence is MSMPATSTKTTKLATSLIDEYALLGWRAMLTEVNLSPKPGLVDRINCGAHKDMALEDFHRSALAIQGWLPRFIEFGACSAEMAPEAVLHGLRPIGMACEGDMFRATAGVNTHKGSIFSLGLLCAAIGRLLQLNQSLTPTTVCSTAASFCRGLTDRELRTNNSQLTAGQRLYQQLALTGARGEAEAGYPLVINHALPHYLTLLDQGLDPELALLDTLLLLMAINGDTNVASRGGEGGLRWLQREAQTLLQKGGIRTLADLDYLRQFDRECIERNLSPGGSADLLILTWFLAQI.

The protein belongs to the CitG/MdcB family.

It catalyses the reaction 3'-dephospho-CoA + ATP = 2'-(5''-triphospho-alpha-D-ribosyl)-3'-dephospho-CoA + adenine. In Shigella boydii serotype 18 (strain CDC 3083-94 / BS512), this protein is Probable 2-(5''-triphosphoribosyl)-3'-dephosphocoenzyme-A synthase.